Here is a 348-residue protein sequence, read N- to C-terminus: 3-methyl-2-oxobutanoate dehydrogenase subunit beta (348 aa).

Thiamine diphosphate-binding positions include E51, 80–82 (LAE), Q104, and 108–111 (FSYP). Substrate contacts are provided by residues 105 to 108 (FDGF) and H151. The Proton acceptor role is filled by H151.

In terms of assembly, heteromer of E1 alpha (BkdA) and beta (BkdB) subunits. Part of the BCKADH complex, consisting of multiple copies of BkdA/BkdB (E1), BkdC (E2) and Lpd (E3). Thiamine diphosphate serves as cofactor.

It catalyses the reaction N(6)-[(R)-lipoyl]-L-lysyl-[protein] + 3-methyl-2-oxobutanoate + H(+) = N(6)-[(R)-S(8)-2-methylpropanoyldihydrolipoyl]-L-lysyl-[protein] + CO2. Functionally, component of the branched-chain alpha-ketoacid dehydrogenase (BCKADH) complex, that catalyzes the overall conversion of branched-chain alpha-ketoacids to acyl-CoA and CO(2). This chain is 3-methyl-2-oxobutanoate dehydrogenase subunit beta (bkdB), found in Mycobacterium tuberculosis (strain CDC 1551 / Oshkosh).